The following is a 325-amino-acid chain: Oligopeptide transport system permease protein OppB (325 aa).

Transmembrane regions (helical) follow at residues 12–32 (YLVL…LAFS), 102–122 (LVVG…WGAI), 135–155 (LALL…ILGA), 189–208 (LQHL…AGFS), 248–268 (IPMA…AVFV), and 290–310 (TNIV…AGLL). In terms of domain architecture, ABC transmembrane type-1 spans 95–311 (IGVSLRLLVV…AVVLLAGLLS (217 aa)).

Belongs to the binding-protein-dependent transport system permease family. OppBC subfamily. The complex is composed of an ATP-binding protein (OppD), two transmembrane proteins (OppB and OppC) and a solute-binding protein (OppA).

It is found in the cell inner membrane. Part of the ABC transporter complex OppABCD involved in the uptake of oligopeptides. Responsible for the translocation of the substrate across the membrane. This is Oligopeptide transport system permease protein OppB from Mycobacterium bovis (strain ATCC BAA-935 / AF2122/97).